The following is a 789-amino-acid chain: Fibrinogen alpha chain (789 aa).

The N-terminal stretch at 1 to 19 (MLSLRVTCLILSVASTVWT) is a signal peptide. Ser-46 carries the post-translational modification Phosphoserine. Residues 69–554 (CRMKGLIDEA…GRARARPTRD (486 aa)) are a coiled coil. Composition is skewed to basic and acidic residues over residues 263 to 287 (ERPG…RGDF) and 384 to 396 (KGDK…KEKV). Positions 263–420 (ERPGKDGGSR…TITKTVTGPD (158 aa)) are disordered. The segment covering 397–416 (TSSGTSTTHRSCSKTITKTV) has biased composition (polar residues). Cysteines 408 and 438 form a disulfide. Phosphoserine is present on Ser-447. Residue Pro-504 is modified to 4-hydroxyproline; by P4HA1. Positions 526–541 (ADEAGSEAHREGETRN) are enriched in basic and acidic residues. The disordered stretch occupies residues 526–555 (ADEAGSEAHREGETRNTKRGRARARPTRDC). One can recognise a Fibrinogen C-terminal domain in the interval 546–787 (RARARPTRDC…AVRMKIRPLV (242 aa)). N-linked (GlcNAc...) asparagine glycosylation is present at Asn-609. Ca(2+) is bound by residues Asp-714, Asp-716, Trp-718, and Glu-720. Residues Cys-722 and Cys-735 are joined by a disulfide bond.

Heterohexamer; disulfide linked. Contains 2 sets of 3 non-identical chains (alpha, beta and gamma). The 2 heterotrimers are in head to head conformation with the N-termini in a small central domain. Conversion of fibrinogen to fibrin is triggered by thrombin, which cleaves fibrinopeptides A and B from alpha and beta chains, and thus exposes the N-terminal polymerization sites responsible for the formation of the soft clot. The soft clot is converted into the hard clot by factor XIIIA which catalyzes the epsilon-(gamma-glutamyl)lysine cross-linking between gamma chains (stronger) and between alpha chains (weaker) of different monomers. Post-translationally, forms F13A-mediated cross-links between a glutamine and the epsilon-amino group of a lysine residue, forming fibronectin-fibrinogen heteropolymers. In terms of processing, phosphorylated by FAM20C in the extracellular medium. Expressed in liver.

Its subcellular location is the secreted. Its function is as follows. Cleaved by the protease thrombin to yield monomers which, together with fibrinogen beta (FGB) and fibrinogen gamma (FGG), polymerize to form an insoluble fibrin matrix. Fibrin has a major function in hemostasis as one of the primary components of blood clots. In addition, functions during the early stages of wound repair to stabilize the lesion and guide cell migration during re-epithelialization. Was originally thought to be essential for platelet aggregation, based on in vitro studies using anticoagulated blood. However, subsequent studies have shown that it is not absolutely required for thrombus formation in vivo. Enhances expression of SELP in activated platelets via an ITGB3-dependent pathway. Maternal fibrinogen is essential for successful pregnancy. Fibrin deposition is also associated with infection, where it protects against IFNG-mediated hemorrhage. May also facilitate the immune response via both innate and T-cell mediated pathways. This is Fibrinogen alpha chain from Mus musculus (Mouse).